Reading from the N-terminus, the 1058-residue chain is Lon protease homolog, mitochondrial (1058 aa).

The transit peptide at 1–47 (MLTRIRNAGVGGNAARRVRLLAGYTGARMAHAAALNSTTGAGGAARA) directs the protein to the mitochondrion. The segment at 72–151 (GGQCILKQDR…RSNPPSEGEV (80 aa)) is disordered. 2 stretches are compositionally biased toward basic and acidic residues: residues 78–97 (KQDREPDQSDDKKVPPRAEE) and 106–118 (DEEAERQPREEQA). The segment covering 129–142 (GSGGSASSAGGGGR) has biased composition (gly residues). Residues 158–412 (LMVLPMSNRP…KALVFIKKEV (255 aa)) enclose the Lon N-terminal domain. ATP is bound at residue 564 to 571 (GPPGVGKT). The tract at residues 778-814 (TPKSAPAETNIEPENGKPDASAKPLTNNLPAPEPLNI) is disordered. One can recognise a Lon proteolytic domain in the interval 844-1030 (KTPAGVVMGL…DDVFNVLFGS (187 aa)). Catalysis depends on residues Ser-936 and Lys-979.

The protein belongs to the peptidase S16 family. Homohexamer or homoheptamer. Organized in a ring with a central cavity.

Its subcellular location is the mitochondrion matrix. The catalysed reaction is Hydrolysis of proteins in presence of ATP.. In terms of biological role, ATP-dependent serine protease that mediates the selective degradation of misfolded, unassembled or oxidatively damaged polypeptides as well as certain short-lived regulatory proteins in the mitochondrial matrix. May also have a chaperone function in the assembly of inner membrane protein complexes. Participates in the regulation of mitochondrial gene expression and in the maintenance of the integrity of the mitochondrial genome. Binds to mitochondrial DNA in a site-specific manner. The chain is Lon protease homolog, mitochondrial from Eremothecium gossypii (strain ATCC 10895 / CBS 109.51 / FGSC 9923 / NRRL Y-1056) (Yeast).